The chain runs to 486 residues: Cobyric acid synthase (486 aa).

The GATase cobBQ-type domain occupies V248–A435. The Nucleophile role is filled by C329. Residue H427 is part of the active site.

The protein belongs to the CobB/CobQ family. CobQ subfamily.

It functions in the pathway cofactor biosynthesis; adenosylcobalamin biosynthesis. Functionally, catalyzes amidations at positions B, D, E, and G on adenosylcobyrinic A,C-diamide. NH(2) groups are provided by glutamine, and one molecule of ATP is hydrogenolyzed for each amidation. This is Cobyric acid synthase from Pseudomonas syringae pv. tomato (strain ATCC BAA-871 / DC3000).